Consider the following 467-residue polypeptide: Glutamine synthetase (467 aa).

Positions 14–98 (EEVEYVDIRF…VHCNVVEPDT (85 aa)) constitute a GS beta-grasp domain. The 362-residue stretch at 106 to 467 (PRGAAVKAEA…PVEYQMYYSC (362 aa)) folds into the GS catalytic domain. Positions 131 and 133 each coordinate Mg(2+). Asp-209 provides a ligand contact to ATP. 2 residues coordinate Mg(2+): Glu-214 and Glu-221. L-glutamate is bound by residues 265-266 (NG) and Gly-266. Residue His-270 participates in Mg(2+) binding. ATP is bound by residues 272 to 274 (NMS) and Ser-274. L-glutamate contacts are provided by Arg-320, Glu-326, and Arg-338. Positions 338 and 343 each coordinate ATP. Glu-356 contacts Mg(2+). Position 358 (Arg-358) interacts with L-glutamate. Position 396 is an O-AMP-tyrosine (Tyr-396).

The protein belongs to the glutamine synthetase family. In terms of assembly, oligomer of 12 subunits arranged in the form of two hexameric ring. It depends on Mg(2+) as a cofactor.

It localises to the cytoplasm. The enzyme catalyses L-glutamate + NH4(+) + ATP = L-glutamine + ADP + phosphate + H(+). Its activity is regulated as follows. The activity of this enzyme could be controlled by adenylation under conditions of abundant glutamine. In terms of biological role, catalyzes the ATP-dependent biosynthesis of glutamine from glutamate and ammonia. The polypeptide is Glutamine synthetase (Cereibacter sphaeroides (Rhodobacter sphaeroides)).